A 167-amino-acid polypeptide reads, in one-letter code: Nascent polypeptide-associated complex subunit beta (167 aa).

Disordered stretches follow at residues 1 to 48 and 133 to 167; these read MDQA…GADD and QNMQKNQAGAEGKKDDEEDDIPDLVEGQDFESKVE. Basic residues predominate over residues 25-42; the sequence is NRNRGKGTPRRKVKKVHK. The NAC-A/B domain maps to 45–110; the sequence is GADDKKLQAT…GEEKELTELV (66 aa). Residues 148-161 are compositionally biased toward acidic residues; the sequence is DEEDDIPDLVEGQD.

Belongs to the NAC-beta family. Part of the nascent polypeptide-associated complex (NAC), consisting of egd2 and egd1. NAC associates with ribosomes via egd1.

It is found in the cytoplasm. The protein resides in the nucleus. Component of the nascent polypeptide-associated complex (NAC), a dynamic component of the ribosomal exit tunnel, protecting the emerging polypeptides from interaction with other cytoplasmic proteins to ensure appropriate nascent protein targeting. The NAC complex also promotes mitochondrial protein import by enhancing productive ribosome interactions with the outer mitochondrial membrane and blocks the inappropriate interaction of ribosomes translating non-secretory nascent polypeptides with translocation sites in the membrane of the endoplasmic reticulum. EGD1 may act as a transcription factor that exert a negative effect on the expression of several genes that are transcribed by RNA polymerase II. The sequence is that of Nascent polypeptide-associated complex subunit beta (egd1) from Aspergillus terreus (strain NIH 2624 / FGSC A1156).